Here is a 198-residue protein sequence, read N- to C-terminus: Recombination protein RecR (198 aa).

The C4-type zinc-finger motif lies at 57–72 (CSVCHNITDTDPCRIC). The 96-residue stretch at 80-175 (SVICVVQDAK…KVTRIAHGLP (96 aa)) folds into the Toprim domain.

It belongs to the RecR family.

In terms of biological role, may play a role in DNA repair. It seems to be involved in an RecBC-independent recombinational process of DNA repair. It may act with RecF and RecO. The protein is Recombination protein RecR of Halalkalibacterium halodurans (strain ATCC BAA-125 / DSM 18197 / FERM 7344 / JCM 9153 / C-125) (Bacillus halodurans).